Reading from the N-terminus, the 183-residue chain is Capsid protein (183 aa).

Residues Asn-136–Cys-183 form a disordered region. The span at Val-149 to Ser-176 shows a compositional bias: basic residues. Phosphoserine; by host is present on residues Ser-155, Ser-162, and Ser-170. Residues Ser-155–Pro-161 form a 1; half-length repeat. A 3 X 8 AA repeats of S-P-R-R-R-[PR]-S-Q region spans residues Ser-155–Gln-177. Residues Arg-158–Arg-175 carry the Bipartite nuclear localization signal motif. Repeat copies occupy residues Ser-162–Gln-169 and Ser-170–Gln-177. The RNA binding stretch occupies residues Gln-177 to Cys-183.

The protein belongs to the orthohepadnavirus core antigen family. In terms of assembly, homodimerizes, then multimerizes. Interacts with cytosol exposed regions of viral L glycoprotein present in the reticulum-to-Golgi compartment. Interacts with human FLNB. Phosphorylated form interacts with host importin alpha; this interaction depends on the exposure of the NLS, which itself depends upon genome maturation and/or phosphorylation of the capsid protein. Interacts with host NUP153. Phosphorylated by host SRPK1, SRPK2, and maybe protein kinase C or GAPDH. Phosphorylation is critical for pregenomic RNA packaging. Protein kinase C phosphorylation is stimulated by HBx protein and may play a role in transport of the viral genome to the nucleus at the late step during the viral replication cycle.

It localises to the virion. Its subcellular location is the host cytoplasm. Functionally, self assembles to form an icosahedral capsid. Most capsids appear to be large particles with an icosahedral symmetry of T=4 and consist of 240 copies of capsid protein, though a fraction forms smaller T=3 particles consisting of 180 capsid proteins. Entering capsids are transported along microtubules to the nucleus. Phosphorylation of the capsid is thought to induce exposure of nuclear localization signal in the C-terminal portion of the capsid protein that allows binding to the nuclear pore complex via the importin (karyopherin-) alpha and beta. Capsids are imported in intact form through the nuclear pore into the nuclear basket, where it probably binds NUP153. Only capsids that contain the mature viral genome can release the viral DNA and capsid protein into the nucleoplasm. Immature capsids get stuck in the basket. Capsids encapsulate the pre-genomic RNA and the P protein. Pre-genomic RNA is reverse-transcribed into DNA while the capsid is still in the cytoplasm. The capsid can then either be directed to the nucleus, providing more genomes for transcription, or bud through the endoplasmic reticulum to provide new virions. In Homo sapiens (Human), this protein is Capsid protein.